Consider the following 389-residue polypeptide: 5-hydroxytryptamine receptor 1B (389 aa).

Residues 1-45 are Extracellular-facing; the sequence is MGNPEASCTPPAVLGSQTGLPHANVSAPPNNCSAPSHIYQDSIAL. N-linked (GlcNAc...) asparagine glycosylation is found at asparagine 24 and asparagine 31. Residues 46–71 traverse the membrane as a helical segment; it reads PWKVLLVVLLALITLATTLSNAFVIA. At 72–85 the chain is on the cytoplasmic side; it reads TVYRTRKLHTPANY. Residues 86-110 form a helical membrane-spanning segment; sequence LIASLAFTDLLVSILVMPISTMYTV. Residues 111-118 lie on the Extracellular side of the membrane; the sequence is TGRWTLGQ. A helical transmembrane segment spans residues 119 to 144; sequence ALCDFWLSSDITCCTASIMHLCVIAL. Cysteines 121 and 198 form a disulfide. 2 residues coordinate ergotamine: aspartate 128 and threonine 133. A DRY motif; important for ligand-induced conformation changes and signaling motif is present at residues 145-147; sequence DRY. Over 145 to 164 the chain is Cytoplasmic; the sequence is DRYWAITDAVGYSAKRTPRR. Residues 165–183 traverse the membrane as a helical segment; sequence AAGMIALVWVFSICISLPP. Residues 184–204 are Extracellular-facing; that stretch reads FFWRQAKAEEEVLDCLVNTDH. Valine 200 contacts ergotamine. Residues 205–228 traverse the membrane as a helical segment; it reads VLYTVYSTGGAFYLPTLLLIALYG. Residues 229–314 are Cytoplasmic-facing; it reads RIYVEARSRI…AARERKATKT (86 aa). The helical transmembrane segment at 315-336 threads the bilayer; it reads LGVILGAFIVCWLPFFIISLVM. Topologically, residues 337–346 are extracellular; that stretch reads PICKDACWFH. The chain crosses the membrane as a helical span at residues 347–369; it reads MAIFDFFTWLGYLNSLINPIIYT. Residues 364 to 368 carry the NPxxY motif; important for ligand-induced conformation changes and signaling motif; it reads NPIIY. Residues 370–389 are Cytoplasmic-facing; sequence MSNEDFKQAFHKLIRFKCTT. A lipid anchor (S-palmitoyl cysteine) is attached at cysteine 387.

This sequence belongs to the G-protein coupled receptor 1 family. Homodimer. Heterodimer with HTR1D. In terms of processing, phosphorylated. Desensitization of the receptor may be mediated by its phosphorylation. Palmitoylated.

The protein localises to the cell membrane. G-protein coupled receptor for 5-hydroxytryptamine (serotonin). Also functions as a receptor for ergot alkaloid derivatives, various anxiolytic and antidepressant drugs and other psychoactive substances, such as lysergic acid diethylamide (LSD). Ligand binding causes a conformation change that triggers signaling via guanine nucleotide-binding proteins (G proteins) and modulates the activity of downstream effectors, such as adenylate cyclase. HTR1B is coupled to G(i)/G(o) G alpha proteins and mediates inhibitory neurotransmission by inhibiting adenylate cyclase activity. Arrestin family members inhibit signaling via G proteins and mediate activation of alternative signaling pathways. Regulates the release of 5-hydroxytryptamine, dopamine and acetylcholine in the brain, and thereby affects neural activity, nociceptive processing, pain perception, mood and behavior. Besides, plays a role in vasoconstriction of cerebral arteries. This is 5-hydroxytryptamine receptor 1B (HTR1B) from Cavia porcellus (Guinea pig).